The sequence spans 266 residues: Putative expansin-A30 (266 aa).

An N-terminal signal peptide occupies residues 1 to 24 (MAAASSTTATTAILAAVIISLAGA). An Expansin-like EG45 domain is found at 55–170 (GGACGYGNLY…RRVPCARAGG (116 aa)). One can recognise an Expansin-like CBD domain in the interval 180-261 (YWLLAYVMNV…SWCFGLTYQA (82 aa)).

It belongs to the expansin family. Expansin A subfamily.

It is found in the secreted. The protein localises to the cell wall. It localises to the membrane. In terms of biological role, may cause loosening and extension of plant cell walls by disrupting non-covalent bonding between cellulose microfibrils and matrix glucans. No enzymatic activity has been found. May be required for rapid internodal elongation in deepwater rice during submergence. This Oryza sativa subsp. japonica (Rice) protein is Putative expansin-A30 (EXPA30).